Here is a 591-residue protein sequence, read N- to C-terminus: Formate--tetrahydrofolate ligase (591 aa).

An ATP-binding site is contributed by 74–81 (TPLGEGKS).

Belongs to the formate--tetrahydrofolate ligase family.

It catalyses the reaction (6S)-5,6,7,8-tetrahydrofolate + formate + ATP = (6R)-10-formyltetrahydrofolate + ADP + phosphate. It participates in one-carbon metabolism; tetrahydrofolate interconversion. This Desulforapulum autotrophicum (strain ATCC 43914 / DSM 3382 / VKM B-1955 / HRM2) (Desulfobacterium autotrophicum) protein is Formate--tetrahydrofolate ligase.